The chain runs to 279 residues: MQKAGLLLRGWTRAWKSVRMASSGLTRQNPLANKVALVTASTDGIGLAIARRLAEDGAHVVISSRKQQNVDRAVATLQGEGLSVTGVVCHVGKAEDREKLVNMALKLHQGIDILVSNAAVNPFFGNLMDVTEEVWNKVLSINVTASAMMIKAVVPAMEKRGGGSVVIVSSVAGFVLFPSLGPYNVSKTALLGLTKNFAAELAPKNIRVNCLAPGLIKTHFSSVLWKEKAREEMIKETMQIRRLGKPEDCVGIVSFLCSEDASYINGETVVVGGGTPSRL.

Residue 37-61 coordinates NADP(+); that stretch reads LVTASTDGIGLAIARRLAEDGAHVV. Lysine 93 carries the N6-acetyllysine; alternate modification. The residue at position 93 (lysine 93) is an N6-succinyllysine; alternate. Lysine 106 bears the N6-acetyllysine mark. Serine 170 is a substrate binding site. Tyrosine 183 serves as the catalytic Proton acceptor. Residue lysine 187 coordinates NADP(+). N6-acetyllysine; alternate is present on lysine 217. N6-succinyllysine; alternate is present on lysine 217. Serine 221 bears the Phosphoserine mark. Lysine 228 and lysine 235 each carry N6-succinyllysine. The Peroxisomal targeting signal signature appears at 277–279; that stretch reads SRL.

This sequence belongs to the short-chain dehydrogenases/reductases (SDR) family. As to quaternary structure, homotetramer.

It localises to the peroxisome. It catalyses the reaction a secondary alcohol + NADP(+) = a ketone + NADPH + H(+). It carries out the reaction 3alpha-hydroxy-5beta-pregnan-20-one + NADP(+) = 5beta-pregnan-3,20-dione + NADPH + H(+). The catalysed reaction is 5beta-dihydrotestosterone + NADPH + H(+) = 5beta-androstane-3alpha,17beta-diol + NADP(+). The enzyme catalyses all-trans-retinol + NADP(+) = all-trans-retinal + NADPH + H(+). It catalyses the reaction isatin + NADPH + H(+) = 3-hydroxyindolin-2-one + NADP(+). In terms of biological role, NADPH-dependent oxidoreductase which catalyzes the reduction of a variety of compounds bearing carbonyl groups including ketosteroids, alpha-dicarbonyl compounds, aldehydes, aromatic ketones and quinones. Reduces all-trans-retinal and 9-cis retinal. Reduces 3-ketosteroids and benzil into 3alpha-hydroxysteroids and S-benzoin, respectively, in contrast to the stereoselectivity of primates DHRS4s which produce 3beta-hydroxysteroids and R-benzoin. In the reverse reaction, catalyzes the NADP-dependent oxidation of 3alpha-hydroxysteroids and alcohol, but with much lower efficiency. Involved in the metabolism of 3alpha-hydroxysteroids, retinoid, isatin and xenobiotic carbonyl compounds. The sequence is that of Dehydrogenase/reductase SDR family member 4 (Dhrs4) from Rattus norvegicus (Rat).